The chain runs to 529 residues: Isoleucine--tRNA ligase (529 aa).

L-isoleucyl-5'-AMP is bound at residue E482. The short motif at 523–527 (KMSKS) is the 'KMSKS' region element. K526 contributes to the ATP binding site.

This sequence belongs to the class-I aminoacyl-tRNA synthetase family. IleS type 1 subfamily. As to quaternary structure, monomer.

Its subcellular location is the cytoplasm. It carries out the reaction tRNA(Ile) + L-isoleucine + ATP = L-isoleucyl-tRNA(Ile) + AMP + diphosphate. Its function is as follows. Catalyzes the attachment of isoleucine to tRNA(Ile). As IleRS can inadvertently accommodate and process structurally similar amino acids such as valine, to avoid such errors it has two additional distinct tRNA(Ile)-dependent editing activities. One activity is designated as 'pretransfer' editing and involves the hydrolysis of activated Val-AMP. The other activity is designated 'posttransfer' editing and involves deacylation of mischarged Val-tRNA(Ile). The chain is Isoleucine--tRNA ligase (ileS) from Aquifex pyrophilus.